Here is a 620-residue protein sequence, read N- to C-terminus: Translation initiation factor IF-2 (620 aa).

Residues 126-295 (KRPPIVTIMG…IVTAEIMELK (170 aa)) form the tr-type G domain. The interval 135–142 (GHVDHGKT) is G1. GTP is bound at residue 135 to 142 (GHVDHGKT). The segment at 160–164 (NITQS) is G2. The G3 stretch occupies residues 181-184 (DTPG). Residues 181–185 (DTPGH) and 235–238 (NKMD) each bind GTP. Residues 235–238 (NKMD) form a G4 region. The interval 271-273 (SAL) is G5.

Belongs to the TRAFAC class translation factor GTPase superfamily. Classic translation factor GTPase family. IF-2 subfamily.

It localises to the cytoplasm. One of the essential components for the initiation of protein synthesis. Protects formylmethionyl-tRNA from spontaneous hydrolysis and promotes its binding to the 30S ribosomal subunits. Also involved in the hydrolysis of GTP during the formation of the 70S ribosomal complex. This chain is Translation initiation factor IF-2, found in Malacoplasma penetrans (strain HF-2) (Mycoplasma penetrans).